The following is a 363-amino-acid chain: Phosphoserine aminotransferase (363 aa).

Arg-42 contributes to the L-glutamate binding site. Residues 76-77 (GR), Trp-102, Thr-156, Asp-175, and Gln-198 contribute to the pyridoxal 5'-phosphate site. Lys-199 is modified (N6-(pyridoxal phosphate)lysine). Pyridoxal 5'-phosphate is bound at residue 240-241 (NT).

The protein belongs to the class-V pyridoxal-phosphate-dependent aminotransferase family. SerC subfamily. In terms of assembly, homodimer. The cofactor is pyridoxal 5'-phosphate.

The protein localises to the cytoplasm. The enzyme catalyses O-phospho-L-serine + 2-oxoglutarate = 3-phosphooxypyruvate + L-glutamate. The catalysed reaction is 4-(phosphooxy)-L-threonine + 2-oxoglutarate = (R)-3-hydroxy-2-oxo-4-phosphooxybutanoate + L-glutamate. It functions in the pathway amino-acid biosynthesis; L-serine biosynthesis; L-serine from 3-phospho-D-glycerate: step 2/3. The protein operates within cofactor biosynthesis; pyridoxine 5'-phosphate biosynthesis; pyridoxine 5'-phosphate from D-erythrose 4-phosphate: step 3/5. Functionally, catalyzes the reversible conversion of 3-phosphohydroxypyruvate to phosphoserine and of 3-hydroxy-2-oxo-4-phosphonooxybutanoate to phosphohydroxythreonine. The sequence is that of Phosphoserine aminotransferase from Shewanella denitrificans (strain OS217 / ATCC BAA-1090 / DSM 15013).